Reading from the N-terminus, the 219-residue chain is Probable GTP-binding protein EngB (219 aa).

The region spanning 24 to 207 is the EngB-type G domain; the sequence is VQPEIAFAGR…HALIESWLRP (184 aa). GTP is bound by residues 32 to 39, 59 to 63, 81 to 84, 148 to 151, and 185 to 188; these read GRSNAGKS, GRTQH, DLPG, TKCD, and LFSA. The Mg(2+) site is built by Ser39 and Thr61.

It belongs to the TRAFAC class TrmE-Era-EngA-EngB-Septin-like GTPase superfamily. EngB GTPase family. The cofactor is Mg(2+).

In terms of biological role, necessary for normal cell division and for the maintenance of normal septation. The polypeptide is Probable GTP-binding protein EngB (Burkholderia thailandensis (strain ATCC 700388 / DSM 13276 / CCUG 48851 / CIP 106301 / E264)).